We begin with the raw amino-acid sequence, 582 residues long: Pre-hexon-linking protein IIIa (582 aa).

Positions 1–114 are peripentonal hexon-tethering domain; it reads MQRPAIIAER…ALLERVARYN (114 aa). Positions 146 to 259 are binding to hexon-linking protein; the sequence is GSLVALNAFL…FTNTNSLSRD (114 aa). Position 233 is a phosphoserine; by host (serine 233). Threonine 282 carries the post-translational modification Phosphothreonine; by host. The segment at 437 to 479 is disordered; sequence GKKEAGDEGPLLDSRASSPFPSLTSLPASVNSGRTTRPRLTGE. The segment covering 451–471 has biased composition (polar residues); that stretch reads RASSPFPSLTSLPASVNSGRT. Phosphoserine; by host is present on residues serine 458 and serine 465. Phosphotyrosine; by host is present on tyrosine 482. At serine 503 the chain carries Phosphoserine; by host. Residues 517-526 are compositionally biased toward basic and acidic residues; sequence ERREWEERQP. The segment at 517–582 is disordered; it reads ERREWEERQP…RPQGCIGSLY (66 aa). The segment covering 530 to 543 has biased composition (basic residues); the sequence is RPPRQRWQRRKKGA. A propeptide spanning residues 566–582 is cleaved from the precursor; sequence GNPFAHLRPQGCIGSLY.

This sequence belongs to the adenoviridae hexon-linking protein IIIa family. Interacts with hexon proteins; this interaction tethers the peripentonal hexons to hexons situated in the facet. Interacts with the penton protein (via N-terminus). Interacts with packaging protein 3; this interaction is required to promote correct genome packaging. Cleaved near the C-terminus by the viral protease during virion maturation to form the mature protein.

The protein localises to the virion. It is found in the host nucleus. Functionally, structural component of the virion that acts as a cement protein on the capsid exterior which mediates the interactions between the hexons, including the peripentonal hexons, and reaches all the way to the penton vertices. Two hexon linking proteins IIIa, one from each facet, stabilize the unique edge interface between a pair of facets. As the virus enters the host cell, hexon linking proteins IIIa are shed concomitant with virion acidification in the endosome. During virus assembly, seems to play a role in the serotype specificity of the packaging of viral DNA via its interaction with packaging protein 3. This is Pre-hexon-linking protein IIIa from Human adenovirus A serotype 12 (HAdV-12).